A 414-amino-acid chain; its full sequence is Serine hydroxymethyltransferase (414 aa).

(6S)-5,6,7,8-tetrahydrofolate-binding positions include leucine 118 and 122 to 124; that span reads GHL. An N6-(pyridoxal phosphate)lysine modification is found at lysine 227. (6S)-5,6,7,8-tetrahydrofolate-binding positions include glutamate 240 and 350–352; that span reads SPF.

This sequence belongs to the SHMT family. Homodimer. Pyridoxal 5'-phosphate serves as cofactor.

The protein resides in the cytoplasm. It carries out the reaction (6R)-5,10-methylene-5,6,7,8-tetrahydrofolate + glycine + H2O = (6S)-5,6,7,8-tetrahydrofolate + L-serine. The protein operates within one-carbon metabolism; tetrahydrofolate interconversion. Its pathway is amino-acid biosynthesis; glycine biosynthesis; glycine from L-serine: step 1/1. Catalyzes the reversible interconversion of serine and glycine with tetrahydrofolate (THF) serving as the one-carbon carrier. This reaction serves as the major source of one-carbon groups required for the biosynthesis of purines, thymidylate, methionine, and other important biomolecules. Also exhibits THF-independent aldolase activity toward beta-hydroxyamino acids, producing glycine and aldehydes, via a retro-aldol mechanism. This chain is Serine hydroxymethyltransferase, found in Bacillus thuringiensis (strain Al Hakam).